We begin with the raw amino-acid sequence, 223 residues long: Ribonuclease 3 (223 aa).

An RNase III domain is found at 4–127; that stretch reads YSQLEKRLNY…IIGAVYLEAG (124 aa). E40 provides a ligand contact to Mg(2+). D44 is a catalytic residue. Mg(2+)-binding residues include N113 and E116. E116 is a catalytic residue. The DRBM domain occupies 154 to 223; the sequence is DYKTALQELT…AKIALEALKK (70 aa).

Belongs to the ribonuclease III family. In terms of assembly, homodimer. Requires Mg(2+) as cofactor.

The protein resides in the cytoplasm. It carries out the reaction Endonucleolytic cleavage to 5'-phosphomonoester.. In terms of biological role, digests double-stranded RNA. Involved in the processing of primary rRNA transcript to yield the immediate precursors to the large and small rRNAs (23S and 16S). Processes some mRNAs, and tRNAs when they are encoded in the rRNA operon. Processes pre-crRNA and tracrRNA of type II CRISPR loci if present in the organism. The chain is Ribonuclease 3 from Sulfurovum sp. (strain NBC37-1).